We begin with the raw amino-acid sequence, 394 residues long: Phosphoglycerate kinase (394 aa).

Residues 21–23 (DLN), arginine 37, 60–63 (HLGR), arginine 115, and arginine 148 contribute to the substrate site. ATP is bound by residues lysine 199, glutamate 321, and 347–350 (GGDT).

This sequence belongs to the phosphoglycerate kinase family. Monomer.

The protein resides in the cytoplasm. It carries out the reaction (2R)-3-phosphoglycerate + ATP = (2R)-3-phospho-glyceroyl phosphate + ADP. The protein operates within carbohydrate degradation; glycolysis; pyruvate from D-glyceraldehyde 3-phosphate: step 2/5. The polypeptide is Phosphoglycerate kinase (Aromatoleum aromaticum (strain DSM 19018 / LMG 30748 / EbN1) (Azoarcus sp. (strain EbN1))).